Consider the following 750-residue polypeptide: (13E)-labda-7,13-dien-15-ol synthase (750 aa).

Positions 284, 286, 501, 505, 647, 651, and 655 each coordinate Mg(2+). Positions 284–287 (DIDD) match the DXDD motif motif. Residues 501-505 (DDLAD) carry the DDXXD motif motif.

Belongs to the terpene synthase family. Requires Mg(2+) as cofactor.

The catalysed reaction is geranylgeranyl diphosphate + H2O = (13E)-labda-7,13-dien-15-ol + diphosphate. It participates in secondary metabolite biosynthesis; terpenoid biosynthesis. Functionally, bifunctional diterpene synthase that directly generates the endocyclic double bond, as well as the hydroxyl group: produces an endocyclic double bond isomer of copalyl diphosphate (CPP), and carries out subsequent replacement of the diphosphate by a hydroxyl group to form (13E)-labda-7,13-dien-15-ol. The polypeptide is (13E)-labda-7,13-dien-15-ol synthase (Selaginella moellendorffii (Spikemoss)).